We begin with the raw amino-acid sequence, 459 residues long: Septin-4 (459 aa).

A phosphoserine mark is found at Ser-10, Ser-49, Ser-98, and Ser-99. Disordered regions lie at residues 18–52 and 70–98; these read FVKD…SPDL and SQQY…PYDS. The 274-residue stretch at 122 to 395 folds into the Septin-type G domain; sequence KGFDFTLMVA…ENYRAQCIQS (274 aa). The interval 132–139 is G1 motif; it reads GESGLGKS. GTP contacts are provided by residues 132–139 and Thr-166; that span reads GESGLGKS. Residues 189–192 are G3 motif; it reads DTPG. The segment at 270 to 273 is G4 motif; the sequence is AKAD. Position 271-279 (271-279) interacts with GTP; that stretch reads KADTLTPSE. Position 306 is a phosphoserine (Ser-306). GTP contacts are provided by Gly-329 and Arg-344. Positions 410–430 are disordered; it reads TRESGTDFPIPAVPPGTDPET. Ser-413 bears the Phosphoserine mark. Thr-415 carries the post-translational modification Phosphothreonine. Residues 434–459 adopt a coiled-coil conformation; it reads IREKDEELRRMQEMLHKIQRQMKETH.

The protein belongs to the TRAFAC class TrmE-Era-EngA-EngB-Septin-like GTPase superfamily. Septin GTPase family. Septins polymerize into heterooligomeric protein complexes that form filaments, and can associate with cellular membranes, actin filaments and microtubules. GTPase activity is required for filament formation. Interacts with SEPTIN8. Component of a septin core octameric complex consisting of SEPTIN12, SEPTIN7, SEPTIN6 and SEPTIN2 or SEPTIN4 in the order 12-7-6-2-2-6-7-12 or 12-7-6-4-4-6-7-12. Interacts with SEPTIN14 (via C-terminus). Interacts with DYRK1A. Interacts with SLC6A3/DAT and SNCA/alpha-synuclein. Interacts with STX1A; in the striatum. Interacts with XIAP (via BIR3 domain) following the induction of apoptosis. Interacts with AREL1 (via HECT domain); in the cytoplasm following induction of apoptosis. Post-translationally, phosphorylated by DYRK1A.

The protein resides in the cytoplasm. It localises to the cell projection. Its subcellular location is the cilium. It is found in the flagellum. The protein localises to the cytoplasmic vesicle. The protein resides in the secretory vesicle. It localises to the axon. Its subcellular location is the dendrite. It is found in the perikaryon. Functionally, filament-forming cytoskeletal GTPase. Pro-apoptotic protein involved in LGR5-positive intestinal stem cell and Paneth cell expansion in the intestines, via its interaction with XIAP. May also play a role in the regulation of cell fate in the intestine. Positive regulator of apoptosis involved in hematopoietic stem cell homeostasis; via its interaction with XIAP. Negative regulator of repair and hair follicle regeneration in response to injury, due to inhibition of hair follicle stem cell proliferation, potentially via its interaction with XIAP. Plays an important role in male fertility and sperm motility. During spermiogenesis, essential for the establishment of the annulus (a fibrous ring structure connecting the midpiece and the principal piece of the sperm flagellum) which is a requisite for the structural and mechanical integrity of the sperm. Involved in the migration of cortical neurons and the formation of neuron leading processes during embryonic development. Required for dopaminergic metabolism in presynaptic autoreceptors; potentially via activity as a presynaptic scaffold protein. This is Septin-4 from Rattus norvegicus (Rat).